The primary structure comprises 423 residues: D-tagatose-1,6-bisphosphate aldolase subunit GatZ (423 aa).

It belongs to the GatZ/KbaZ family. GatZ subfamily. In terms of assembly, forms a complex with GatY.

It functions in the pathway carbohydrate metabolism; D-tagatose 6-phosphate degradation; D-glyceraldehyde 3-phosphate and glycerone phosphate from D-tagatose 6-phosphate: step 2/2. Its function is as follows. Component of the tagatose-1,6-bisphosphate aldolase GatYZ that is required for full activity and stability of the Y subunit. Could have a chaperone-like function for the proper and stable folding of GatY. When expressed alone, GatZ does not show any aldolase activity. Is involved in the catabolism of galactitol. The sequence is that of D-tagatose-1,6-bisphosphate aldolase subunit GatZ from Klebsiella pneumoniae subsp. pneumoniae (strain ATCC 700721 / MGH 78578).